A 216-amino-acid chain; its full sequence is Imidazole glycerol phosphate synthase subunit HisH (216 aa).

The 215-residue stretch at 2 to 216 folds into the Glutamine amidotransferase type-1 domain; it reads SVAIVDYGSG…LISNFLKWKP (215 aa). The Nucleophile role is filled by Cys-88. Catalysis depends on residues His-196 and Glu-198.

In terms of assembly, heterodimer of HisH and HisF.

The protein localises to the cytoplasm. The enzyme catalyses 5-[(5-phospho-1-deoxy-D-ribulos-1-ylimino)methylamino]-1-(5-phospho-beta-D-ribosyl)imidazole-4-carboxamide + L-glutamine = D-erythro-1-(imidazol-4-yl)glycerol 3-phosphate + 5-amino-1-(5-phospho-beta-D-ribosyl)imidazole-4-carboxamide + L-glutamate + H(+). It catalyses the reaction L-glutamine + H2O = L-glutamate + NH4(+). Its pathway is amino-acid biosynthesis; L-histidine biosynthesis; L-histidine from 5-phospho-alpha-D-ribose 1-diphosphate: step 5/9. In terms of biological role, IGPS catalyzes the conversion of PRFAR and glutamine to IGP, AICAR and glutamate. The HisH subunit catalyzes the hydrolysis of glutamine to glutamate and ammonia as part of the synthesis of IGP and AICAR. The resulting ammonia molecule is channeled to the active site of HisF. The chain is Imidazole glycerol phosphate synthase subunit HisH from Rhodopseudomonas palustris (strain ATCC BAA-98 / CGA009).